The following is a 994-amino-acid chain: Alpha-mannosidase F (994 aa).

The first 20 residues, 1-20, serve as a signal peptide directing secretion; the sequence is MKNFYYFILILLFFNEVCYS. Zn(2+) is bound by residues H35, D37, and D151. D151 acts as the Nucleophile in catalysis. N247 and N381 each carry an N-linked (GlcNAc...) asparagine glycan. H392 provides a ligand contact to Zn(2+). 3 N-linked (GlcNAc...) asparagine glycosylation sites follow: N554, N712, and N932.

The protein belongs to the glycosyl hydrolase 38 family. Zn(2+) serves as cofactor.

It localises to the secreted. The catalysed reaction is Hydrolysis of terminal, non-reducing alpha-D-mannose residues in alpha-D-mannosides.. In Dictyostelium discoideum (Social amoeba), this protein is Alpha-mannosidase F (manF).